A 249-amino-acid polypeptide reads, in one-letter code: 3-deoxy-manno-octulosonate cytidylyltransferase (249 aa).

This sequence belongs to the KdsB family.

It localises to the cytoplasm. It catalyses the reaction 3-deoxy-alpha-D-manno-oct-2-ulosonate + CTP = CMP-3-deoxy-beta-D-manno-octulosonate + diphosphate. It participates in nucleotide-sugar biosynthesis; CMP-3-deoxy-D-manno-octulosonate biosynthesis; CMP-3-deoxy-D-manno-octulosonate from 3-deoxy-D-manno-octulosonate and CTP: step 1/1. The protein operates within bacterial outer membrane biogenesis; lipopolysaccharide biosynthesis. Its function is as follows. Activates KDO (a required 8-carbon sugar) for incorporation into bacterial lipopolysaccharide in Gram-negative bacteria. The polypeptide is 3-deoxy-manno-octulosonate cytidylyltransferase (Serratia proteamaculans (strain 568)).